We begin with the raw amino-acid sequence, 429 residues long: Glutamate-1-semialdehyde 2,1-aminomutase 2 (429 aa).

The residue at position 268 (Lys-268) is an N6-(pyridoxal phosphate)lysine.

This sequence belongs to the class-III pyridoxal-phosphate-dependent aminotransferase family. HemL subfamily. In terms of assembly, homodimer. It depends on pyridoxal 5'-phosphate as a cofactor.

The protein resides in the cytoplasm. It carries out the reaction (S)-4-amino-5-oxopentanoate = 5-aminolevulinate. It participates in porphyrin-containing compound metabolism; protoporphyrin-IX biosynthesis; 5-aminolevulinate from L-glutamyl-tRNA(Glu): step 2/2. This chain is Glutamate-1-semialdehyde 2,1-aminomutase 2, found in Staphylococcus aureus (strain MRSA252).